The chain runs to 340 residues: Holliday junction branch migration complex subunit RuvB (340 aa).

The tract at residues 1–184 (MNENLDPTNQ…FGIQSRLQYY (184 aa)) is large ATPase domain (RuvB-L). Residues L23, R24, G65, K68, T69, T70, 131–133 (EDF), R174, Y184, and R221 each bind ATP. Mg(2+) is bound at residue T69. The tract at residues 185-255 (NAELLTTIVQ…IAKFALNALH (71 aa)) is small ATPAse domain (RuvB-S). Residues 258-340 (AHGLDEMDNK…VKANVQGGLF (83 aa)) are head domain (RuvB-H). R313 and R318 together coordinate DNA.

The protein belongs to the RuvB family. Homohexamer. Forms an RuvA(8)-RuvB(12)-Holliday junction (HJ) complex. HJ DNA is sandwiched between 2 RuvA tetramers; dsDNA enters through RuvA and exits via RuvB. An RuvB hexamer assembles on each DNA strand where it exits the tetramer. Each RuvB hexamer is contacted by two RuvA subunits (via domain III) on 2 adjacent RuvB subunits; this complex drives branch migration. In the full resolvosome a probable DNA-RuvA(4)-RuvB(12)-RuvC(2) complex forms which resolves the HJ.

Its subcellular location is the cytoplasm. It catalyses the reaction ATP + H2O = ADP + phosphate + H(+). The RuvA-RuvB-RuvC complex processes Holliday junction (HJ) DNA during genetic recombination and DNA repair, while the RuvA-RuvB complex plays an important role in the rescue of blocked DNA replication forks via replication fork reversal (RFR). RuvA specifically binds to HJ cruciform DNA, conferring on it an open structure. The RuvB hexamer acts as an ATP-dependent pump, pulling dsDNA into and through the RuvAB complex. RuvB forms 2 homohexamers on either side of HJ DNA bound by 1 or 2 RuvA tetramers; 4 subunits per hexamer contact DNA at a time. Coordinated motions by a converter formed by DNA-disengaged RuvB subunits stimulates ATP hydrolysis and nucleotide exchange. Immobilization of the converter enables RuvB to convert the ATP-contained energy into a lever motion, pulling 2 nucleotides of DNA out of the RuvA tetramer per ATP hydrolyzed, thus driving DNA branch migration. The RuvB motors rotate together with the DNA substrate, which together with the progressing nucleotide cycle form the mechanistic basis for DNA recombination by continuous HJ branch migration. Branch migration allows RuvC to scan DNA until it finds its consensus sequence, where it cleaves and resolves cruciform DNA. This is Holliday junction branch migration complex subunit RuvB from Flavobacterium psychrophilum (strain ATCC 49511 / DSM 21280 / CIP 103535 / JIP02/86).